A 440-amino-acid polypeptide reads, in one-letter code: Methylenetetrahydrofolate--tRNA-(uracil-5-)-methyltransferase TrmFO (440 aa).

Residue 14-19 (GAGLAG) coordinates FAD.

This sequence belongs to the MnmG family. TrmFO subfamily. FAD serves as cofactor.

The protein resides in the cytoplasm. It catalyses the reaction uridine(54) in tRNA + (6R)-5,10-methylene-5,6,7,8-tetrahydrofolate + NADH + H(+) = 5-methyluridine(54) in tRNA + (6S)-5,6,7,8-tetrahydrofolate + NAD(+). The catalysed reaction is uridine(54) in tRNA + (6R)-5,10-methylene-5,6,7,8-tetrahydrofolate + NADPH + H(+) = 5-methyluridine(54) in tRNA + (6S)-5,6,7,8-tetrahydrofolate + NADP(+). Functionally, catalyzes the folate-dependent formation of 5-methyl-uridine at position 54 (M-5-U54) in all tRNAs. The polypeptide is Methylenetetrahydrofolate--tRNA-(uracil-5-)-methyltransferase TrmFO (Bdellovibrio bacteriovorus (strain ATCC 15356 / DSM 50701 / NCIMB 9529 / HD100)).